A 344-amino-acid chain; its full sequence is Ribosomal RNA large subunit methyltransferase Cfr (344 aa).

Glutamate 90 functions as the Proton acceptor in the catalytic mechanism. Positions lysine 97–glutamate 330 constitute a Radical SAM core domain. Cysteines 104 and 335 form a disulfide. Residues cysteine 111, cysteine 115, and cysteine 118 each coordinate [4Fe-4S] cluster. S-adenosyl-L-methionine-binding positions include glycine 157 to glutamate 158, serine 188, serine 211 to histidine 213, and asparagine 292. Cysteine 335 acts as the S-methylcysteine intermediate in catalysis.

Belongs to the radical SAM superfamily. RlmN family. Cfr subfamily. Requires [4Fe-4S] cluster as cofactor.

The protein resides in the cytoplasm. It carries out the reaction adenosine(2503) in 23S rRNA + 2 reduced [2Fe-2S]-[ferredoxin] + 2 S-adenosyl-L-methionine = 8-methyladenosine(2503) in 23S rRNA + 5'-deoxyadenosine + L-methionine + 2 oxidized [2Fe-2S]-[ferredoxin] + S-adenosyl-L-homocysteine. Its function is as follows. Specifically methylates position 8 of adenine 2503 in 23S rRNA. Confers resistance to some classes of antibiotics. This is Ribosomal RNA large subunit methyltransferase Cfr from Clostridium botulinum (strain Okra / Type B1).